The chain runs to 474 residues: Peroxisome proliferator-activated receptor alpha (474 aa).

Positions 106–180 (NLECRVCSDK…VGMSHNAIRF (75 aa)) form a DNA-binding region, nuclear receptor. 2 consecutive NR C4-type zinc fingers follow at residues 109–129 (CRVC…CEGC) and 146–168 (CERM…FEKC). Residues 245-472 (FVIHDMETLC…HPLLQEIYRD (228 aa)) enclose the NR LBD domain.

It belongs to the nuclear hormone receptor family. NR1 subfamily. As to quaternary structure, heterodimer with the retinoid X receptor. As to expression, ubiquitous.

It localises to the nucleus. Ligand-activated transcription factor. Key regulator of lipid metabolism. Activated by lipids. Receptor for peroxisome proliferators such as hypolipidemic drugs and fatty acids. Once activated by a ligand, the receptor binds to promoter elements of target genes. Regulates the peroxisomal beta-oxidation pathway of fatty acids. This Xenopus laevis (African clawed frog) protein is Peroxisome proliferator-activated receptor alpha (ppara).